We begin with the raw amino-acid sequence, 244 residues long: Small ribosomal subunit protein uS3 (244 aa).

Residues 39-107 (VREMLRKKLA…PAHINVTEVR (69 aa)) form the KH type-2 domain. The tract at residues 213 to 244 (VGQEKQDDSPRNDRNDRGDRGDRPSRPAREAR) is disordered. Over residues 216–244 (EKQDDSPRNDRNDRGDRGDRPSRPAREAR) the composition is skewed to basic and acidic residues.

It belongs to the universal ribosomal protein uS3 family. In terms of assembly, part of the 30S ribosomal subunit. Forms a tight complex with proteins S10 and S14.

Functionally, binds the lower part of the 30S subunit head. Binds mRNA in the 70S ribosome, positioning it for translation. This Xanthomonas oryzae pv. oryzae (strain MAFF 311018) protein is Small ribosomal subunit protein uS3.